Consider the following 548-residue polypeptide: MFS-type transporter TOXA (548 aa).

Polar residues predominate over residues 1–12; it reads MDEQIVSASSNV. Residues 1–33 form a disordered region; it reads MDEQIVSASSNVKDGVEKQPVKDREDVDANVVP. Residues 14–27 show a composition bias toward basic and acidic residues; it reads DGVEKQPVKDREDV. 14 consecutive transmembrane segments (helical) span residues 43 to 63, 85 to 105, 114 to 134, 146 to 166, 177 to 197, 204 to 224, 250 to 270, 280 to 300, 316 to 336, 357 to 377, 382 to 402, 411 to 431, 444 to 464, and 518 to 538; these read ISLI…FLGA, AVAW…PLFG, KWLF…CALA, VAGI…ALIV, MIGA…GAIA, WCFW…LFFF, IGAG…QWGG, VVAL…HQYW, GFLL…AALY, MLPI…TISF, APFI…LYTF, IIGY…QAFI, YASA…LCVC, and FLVA…LSWA.

This sequence belongs to the major facilitator superfamily. TCR/Tet family.

Its subcellular location is the membrane. In terms of biological role, MFS-type transporter; part of the diffuse TOX2 gene cluster that mediates the biosynthesis of the HC-toxin, cyclic tetrapeptide of structure cyclo(D-Pro-L-Ala-D-Ala-L-Aeo), where Aeo stands for 2-amino-9,10-epoxi-8-oxodecanoic acid. HC-toxin is a determinant of specificity and virulence in the interaction between the producing fungus and its host, maize. TOXA acts as a HC-toxin efflux pump which contributes to self-protection against HC-toxin and/or the secretion of HC-toxin into the extracellular milieu. In Cochliobolus carbonum (Maize leaf spot fungus), this protein is MFS-type transporter TOXA.